The sequence spans 166 residues: KH homology domain-containing protein 1A (166 aa).

In terms of domain architecture, KH; atypical spans 19–78 (PLVFDMEEDKEDYIFGPHDEYLHTLEVHSNTLIQLERWFTPTGQTRVTVVGPLKARLWVM).

Belongs to the KHDC1 family.

The protein localises to the cytoplasm. Has pro-apoptotic activity. The protein is KH homology domain-containing protein 1A (Khdc1a) of Mus musculus (Mouse).